A 256-amino-acid chain; its full sequence is Thiazole synthase (256 aa).

Residue Lys-95 is the Schiff-base intermediate with DXP of the active site. 1-deoxy-D-xylulose 5-phosphate is bound by residues Gly-156, 182 to 183, and 204 to 205; these read AG and NT.

The protein belongs to the ThiG family. In terms of assembly, homotetramer. Forms heterodimers with either ThiH or ThiS.

Its subcellular location is the cytoplasm. It carries out the reaction [ThiS sulfur-carrier protein]-C-terminal-Gly-aminoethanethioate + 2-iminoacetate + 1-deoxy-D-xylulose 5-phosphate = [ThiS sulfur-carrier protein]-C-terminal Gly-Gly + 2-[(2R,5Z)-2-carboxy-4-methylthiazol-5(2H)-ylidene]ethyl phosphate + 2 H2O + H(+). Its pathway is cofactor biosynthesis; thiamine diphosphate biosynthesis. Catalyzes the rearrangement of 1-deoxy-D-xylulose 5-phosphate (DXP) to produce the thiazole phosphate moiety of thiamine. Sulfur is provided by the thiocarboxylate moiety of the carrier protein ThiS. In vitro, sulfur can be provided by H(2)S. This chain is Thiazole synthase, found in Salmonella arizonae (strain ATCC BAA-731 / CDC346-86 / RSK2980).